A 631-amino-acid polypeptide reads, in one-letter code: Probable potassium transport system protein Kup 1 (631 aa).

12 helical membrane passes run 16–36 (LGLS…SPLY), 58–78 (VLSL…LVFV), 109–129 (VLVF…TLTP), 145–165 (PLFH…LFLI), 173–193 (VGAL…LLGI), 219–239 (GWSG…GEAL), 255–275 (WFCC…ALLL), 288–308 (LAPP…TIIA), 345–365 (IYIP…VAGF), 370–390 (GLAA…ALLV), 402–422 (PLAV…FFGA), and 427–447 (VGAG…VMIT).

This sequence belongs to the HAK/KUP transporter (TC 2.A.72) family.

The protein localises to the cell inner membrane. It catalyses the reaction K(+)(in) + H(+)(in) = K(+)(out) + H(+)(out). Transport of potassium into the cell. Likely operates as a K(+):H(+) symporter. This chain is Probable potassium transport system protein Kup 1, found in Geobacter sulfurreducens (strain ATCC 51573 / DSM 12127 / PCA).